Here is a 448-residue protein sequence, read N- to C-terminus: Antizyme inhibitor 1 (448 aa).

It belongs to the Orn/Lys/Arg decarboxylase class-II family. ODC antizyme inhibitor subfamily. As to quaternary structure, monomer. Interacts with OAZ1 and OAZ3; this interaction disrupts the interaction between the antizyme and ODC1. In terms of processing, ubiquitinated, leading to its proteasomal degradation; a process that is reduced in presence of antizyme OAZ1. Expressed in various tissues including liver, heart and kidney.

Its subcellular location is the nucleus. Functionally, antizyme inhibitor (AZI) protein that positively regulates ornithine decarboxylase (ODC) activity and polyamine uptake. AZI is an enzymatically inactive ODC homolog that counteracts the negative effect of ODC antizymes (AZs) OAZ1, OAZ2 and OAZ3 on ODC activity by competing with ODC for antizyme-binding. Inhibits antizyme-dependent ODC degradation and releases ODC monomers from their inactive complex with antizymes, leading to formation of the catalytically active ODC homodimer and restoring polyamine production. The polypeptide is Antizyme inhibitor 1 (Azin1) (Rattus norvegicus (Rat)).